Consider the following 523-residue polypeptide: GMP synthase [glutamine-hydrolyzing] (523 aa).

Positions Lys8 to Asn205 constitute a Glutamine amidotransferase type-1 domain. Cys85 functions as the Nucleophile in the catalytic mechanism. Active-site residues include His179 and Glu181. The GMPS ATP-PPase domain maps to Trp206–Arg398. ATP is bound at residue Ser233–Ser239.

As to quaternary structure, homodimer.

It catalyses the reaction XMP + L-glutamine + ATP + H2O = GMP + L-glutamate + AMP + diphosphate + 2 H(+). It functions in the pathway purine metabolism; GMP biosynthesis; GMP from XMP (L-Gln route): step 1/1. Its function is as follows. Catalyzes the synthesis of GMP from XMP. This Histophilus somni (strain 129Pt) (Haemophilus somnus) protein is GMP synthase [glutamine-hydrolyzing].